The following is a 296-amino-acid chain: tRNA uridine(34) hydroxylase (296 aa).

A Rhodanese domain is found at 121–215; it reads AQPDVAVIDT…YLEDIPQDQS (95 aa). The active-site Cysteine persulfide intermediate is cysteine 175.

This sequence belongs to the TrhO family.

The catalysed reaction is uridine(34) in tRNA + AH2 + O2 = 5-hydroxyuridine(34) in tRNA + A + H2O. Catalyzes oxygen-dependent 5-hydroxyuridine (ho5U) modification at position 34 in tRNAs. This is tRNA uridine(34) hydroxylase from Roseobacter denitrificans (strain ATCC 33942 / OCh 114) (Erythrobacter sp. (strain OCh 114)).